A 654-amino-acid chain; its full sequence is Hepatocyte growth factor activator serine proteases (654 aa).

The N-terminal stretch at 1-33 (MGRWAWGPSLCPLPGMALLLLLLLLLVPHGAQP) is a signal peptide. A disordered region spans residues 34–100 (QAGGNLTEPP…SSSPGDPVLT (67 aa)). The propeptide at 34-370 (QAGGNLTEPP…RLAACESLAR (337 aa)) is removed in mature form. Residues Asn38 and Asn46 are each glycosylated (N-linked (GlcNAc...) asparagine). Over residues 57–81 (PVTSVTPVTPATSAPEAQGPRGRGL) the composition is skewed to low complexity. The Fibronectin type-II domain occupies 101–148 (VDGQPCRFPFRYGGRMLHACTSEGSAHRKWCATTHNYDRDRAWGYCVQ). 19 disulfides stabilise this stretch: Cys106-Cys131, Cys120-Cys146, Cys162-Cys173, Cys167-Cys184, Cys186-Cys195, Cys200-Cys228, Cys226-Cys235, Cys243-Cys254, Cys248-Cys265, Cys267-Cys276, Cys284-Cys365, Cys305-Cys347, Cys336-Cys360, Cys393-Cys520, Cys431-Cys447, Cys439-Cys509, Cys534-Cys603, Cys566-Cys582, and Cys593-Cys621. Residues 158-196 (ALDSCASSPCLNGGSCSHTQDPGSYHCTCPMAFTGRNCD) enclose the EGF-like 1 domain. The Fibronectin type-I domain occupies 198–238 (EKCFDETRYEHLEAGDRWARVSQGQVEQCECAGGQIRCEGT). Positions 239 to 277 (RHTACLSSPCLNGGTCHLIVATGTTVCSCPPGHAGRLCN) constitute an EGF-like 2 domain. The region spanning 283-365 (RCFVGNGTEY…SWEYCRLAAC (83 aa)) is the Kringle domain. Asn288 carries an N-linked (GlcNAc...) asparagine glycan. A Peptidase S1 domain is found at 407 to 645 (IIGGSSSLPG…YVDWIKDRIW (239 aa)). His446 functions as the Charge relay system in the catalytic mechanism. 2 N-linked (GlcNAc...) asparagine glycosylation sites follow: Asn467 and Asn491. Catalysis depends on Asp496, which acts as the Charge relay system. Asn545 is a glycosylation site (N-linked (GlcNAc...) asparagine). Catalysis depends on Ser597, which acts as the Charge relay system.

Belongs to the peptidase S1 family. As to quaternary structure, heterodimer of a short chain and a long chain linked by a disulfide bond. In terms of processing, the active form of HGFAC presents in the serum is derived from the COOH-terminal region of the precursor by the cleavage of bonds between Arg-370 and Ile-371 and Arg-406 and Ile-407. In terms of tissue distribution, liver.

It is found in the secreted. In terms of biological role, serine protease that hydrolyzes the inactive zymogen hepatocyte growth factor (HGFsc) to an activated disulfide-linked heterodimer, then initiating hepatocyte growth factor receptor signaling pathway. The protein is Hepatocyte growth factor activator serine proteases (HGFAC) of Canis lupus familiaris (Dog).